Reading from the N-terminus, the 357-residue chain is UPF0283 membrane protein HSM_0945 (357 aa).

A run of 3 helical transmembrane segments spans residues 67–87 (LMATICLFSCGILAQSVQWLV), 96–116 (IAFVFAMVSLFLVLLGLGTII), and 213–233 (AVESALIVAVSPLAIVDMFFI).

It belongs to the UPF0283 family.

The protein localises to the cell inner membrane. The protein is UPF0283 membrane protein HSM_0945 of Histophilus somni (strain 2336) (Haemophilus somnus).